A 276-amino-acid polypeptide reads, in one-letter code: 3-methyl-2-oxobutanoate hydroxymethyltransferase (276 aa).

Mg(2+) contacts are provided by Asp45 and Asp84. Residues 45–46, Asp84, and Lys114 contribute to the 3-methyl-2-oxobutanoate site; that span reads DS. Glu116 serves as a coordination point for Mg(2+). Glu183 (proton acceptor) is an active-site residue.

This sequence belongs to the PanB family. In terms of assembly, homodecamer; pentamer of dimers. It depends on Mg(2+) as a cofactor.

It is found in the cytoplasm. It catalyses the reaction 3-methyl-2-oxobutanoate + (6R)-5,10-methylene-5,6,7,8-tetrahydrofolate + H2O = 2-dehydropantoate + (6S)-5,6,7,8-tetrahydrofolate. It participates in cofactor biosynthesis; (R)-pantothenate biosynthesis; (R)-pantoate from 3-methyl-2-oxobutanoate: step 1/2. Its function is as follows. Catalyzes the reversible reaction in which hydroxymethyl group from 5,10-methylenetetrahydrofolate is transferred onto alpha-ketoisovalerate to form ketopantoate. This Syntrophomonas wolfei subsp. wolfei (strain DSM 2245B / Goettingen) protein is 3-methyl-2-oxobutanoate hydroxymethyltransferase.